The sequence spans 718 residues: Amino-acid acetyltransferase, mitochondrial (718 aa).

Residues 1-36 (MNPNAVWPRTAQSSLKKHQVSLCTCQRRSHYRLRSF) constitute a mitochondrion transit peptide. The segment at 97-116 (QHQPDLPQKPTSAPASTAKI) is disordered. Residues 539–708 (RQPRLRLDDP…YEAVCRSIQP (170 aa)) enclose the N-acetyltransferase domain.

The protein belongs to the acetyltransferase family.

The protein resides in the mitochondrion. The catalysed reaction is L-glutamate + acetyl-CoA = N-acetyl-L-glutamate + CoA + H(+). It participates in amino-acid biosynthesis; L-arginine biosynthesis; N(2)-acetyl-L-ornithine from L-glutamate: step 1/4. In terms of biological role, N-acetylglutamate synthase involved in arginine biosynthesis. In Aspergillus clavatus (strain ATCC 1007 / CBS 513.65 / DSM 816 / NCTC 3887 / NRRL 1 / QM 1276 / 107), this protein is Amino-acid acetyltransferase, mitochondrial (arg2).